Reading from the N-terminus, the 115-residue chain is Phosphoribosyl-AMP cyclohydrolase (115 aa).

Aspartate 80 is a Mg(2+) binding site. Cysteine 81 provides a ligand contact to Zn(2+). Mg(2+) contacts are provided by aspartate 82 and aspartate 84. Residues cysteine 97 and cysteine 104 each contribute to the Zn(2+) site.

The protein belongs to the PRA-CH family. As to quaternary structure, homodimer. It depends on Mg(2+) as a cofactor. The cofactor is Zn(2+).

Its subcellular location is the cytoplasm. The enzyme catalyses 1-(5-phospho-beta-D-ribosyl)-5'-AMP + H2O = 1-(5-phospho-beta-D-ribosyl)-5-[(5-phospho-beta-D-ribosylamino)methylideneamino]imidazole-4-carboxamide. It functions in the pathway amino-acid biosynthesis; L-histidine biosynthesis; L-histidine from 5-phospho-alpha-D-ribose 1-diphosphate: step 3/9. Its function is as follows. Catalyzes the hydrolysis of the adenine ring of phosphoribosyl-AMP. The protein is Phosphoribosyl-AMP cyclohydrolase of Mycobacterium leprae (strain Br4923).